The sequence spans 294 residues: Foldase protein PrsA 1 (294 aa).

An N-terminal signal peptide occupies residues 1–21; it reads MTKLKKVMISVIAATLLLLAG. Cys-22 carries the N-palmitoyl cysteine lipid modification. Cys-22 carries S-diacylglycerol cysteine lipidation. In terms of domain architecture, PpiC spans 135 to 226; it reads EPDITVRHIL…YGYHLIQLVK (92 aa).

Belongs to the PrsA family.

Its subcellular location is the cell membrane. The enzyme catalyses [protein]-peptidylproline (omega=180) = [protein]-peptidylproline (omega=0). Its function is as follows. Plays a major role in protein secretion by helping the post-translocational extracellular folding of several secreted proteins. The protein is Foldase protein PrsA 1 of Listeria monocytogenes serotype 4b (strain F2365).